The primary structure comprises 594 residues: UvrABC system protein C (594 aa).

A GIY-YIG domain is found at 14–91 (DSPGCYLHKD…IQENMPKYNI (78 aa)). The region spanning 196–231 (DKIIDDLRSKMLEASHNQEFERAAEYRDLISGIATM) is the UVR domain.

Belongs to the UvrC family. As to quaternary structure, interacts with UvrB in an incision complex.

The protein resides in the cytoplasm. Its function is as follows. The UvrABC repair system catalyzes the recognition and processing of DNA lesions. UvrC both incises the 5' and 3' sides of the lesion. The N-terminal half is responsible for the 3' incision and the C-terminal half is responsible for the 5' incision. This is UvrABC system protein C from Streptococcus equi subsp. zooepidemicus (strain H70).